The sequence spans 398 residues: Substance-K receptor (398 aa).

The Extracellular portion of the chain corresponds to 1-32; sequence MGTCDIVTEANISSGPESNTTGITAFSMPSWQ. N-linked (GlcNAc...) asparagine glycans are attached at residues N11 and N19. A helical membrane pass occupies residues 33–56; that stretch reads LALWATAYLALVLVAVTGNAIVIW. The Cytoplasmic segment spans residues 57–69; it reads IILAHRRMRTVTN. The chain crosses the membrane as a helical span at residues 70-90; that stretch reads YFIVNLALADLCMAAFNAAFN. The Extracellular segment spans residues 91–107; that stretch reads FVYASHNIWYFGRAFCY. C106 and C181 are oxidised to a cystine. A helical membrane pass occupies residues 108–129; sequence FQNLFPITAMFVSIYSMTAIAA. The Cytoplasmic segment spans residues 130-149; sequence DRYMAIVHPFQPRLSAPSTK. Residues 150–170 traverse the membrane as a helical segment; the sequence is AVIAGIWLVALALASPQCFYS. The Extracellular segment spans residues 171–196; sequence TVTMDQGATKCVVAWPEDSGGKTLLL. The helical transmembrane segment at 197-218 threads the bilayer; it reads YHLVVIALIYFLPLAVMFVAYS. Over 219–251 the chain is Cytoplasmic; that stretch reads VIGLTLWRRAVPGHQAHGANLRHLQAMKKFVKT. The helical transmembrane segment at 252-272 threads the bilayer; that stretch reads MVLVVLTFAICWLPYHLYFIL. At 273–290 the chain is on the extracellular side; that stretch reads GSFQEDIYCHKFIQQVYL. The helical transmembrane segment at 291–310 threads the bilayer; sequence ALFWLAMSSTMYNPIIYCCL. The Cytoplasmic portion of the chain corresponds to 311 to 398; the sequence is NHRFRSGFRL…LAPTKTHVEI (88 aa). The S-palmitoyl cysteine moiety is linked to residue C324.

Belongs to the G-protein coupled receptor 1 family.

The protein resides in the cell membrane. In terms of biological role, this is a receptor for the tachykinin neuropeptide substance K (neurokinin A). It is associated with G proteins that activate a phosphatidylinositol-calcium second messenger system. The rank order of affinity of this receptor to tachykinins is: substance K &gt; neuromedin-K &gt; substance P. The polypeptide is Substance-K receptor (TACR2) (Homo sapiens (Human)).